Reading from the N-terminus, the 322-residue chain is uncharacterized protein (322 aa).

Positions 1-63 (MFKIRKRSVP…DEASSSDSHY (63 aa)) are disordered. The span at 34 to 49 (FVDDHGKPIAEYRDFP) shows a compositional bias: basic and acidic residues. The segment at 245–274 (WKVDRICTYYINRPDKCTRGDNCRFKHDDV) adopts a C3H1-type zinc-finger fold. The interval 278 to 322 (HRQKEIQSSRNQSWHHRTSSHKYSSENSDHRGYRRHRSRSPHARQ) is disordered. Over residues 309–322 (GYRRHRSRSPHARQ) the composition is skewed to basic residues.

This is an uncharacterized protein from Caenorhabditis elegans.